A 161-amino-acid chain; its full sequence is Myosin regulatory light chain (161 aa).

Serine 13 and serine 14 each carry phosphoserine. EF-hand domains are found at residues 20-55, 56-91, and 93-128; these read EQVA…FGVF, VMED…RMKQ, and SNEQ…LGDK.

As to quaternary structure, myosin is a hexamer of 2 heavy chains and 4 light chains (two regulatory light chains and two essential light chains).

The sequence is that of Myosin regulatory light chain (mlcR) from Dictyostelium discoideum (Social amoeba).